Consider the following 188-residue polypeptide: Adrenodoxin, mitochondrial (188 aa).

Residues 1–64 (MAAAPGARLL…RPLSVSARAR (64 aa)) constitute a mitochondrion transit peptide. Phosphoserine is present on S67. Positions 69-175 (DKVTVHFKNR…NMTVRVPEAV (107 aa)) constitute a 2Fe-2S ferredoxin-type domain. The residue at position 70 (K70) is an N6-acetyllysine; alternate. K70 bears the N6-succinyllysine; alternate mark. 4 residues coordinate [2Fe-2S] cluster: C110, C116, C119, and C156. N6-succinyllysine is present on K162. A Phosphoserine modification is found at S181.

The protein belongs to the adrenodoxin/putidaredoxin family. As to quaternary structure, interacts with CYP11A1. [2Fe-2S] cluster serves as cofactor. In terms of tissue distribution, found in all tissues, most abundant in adrenals, ovaries and testes.

It localises to the mitochondrion matrix. Functionally, essential for the synthesis of various steroid hormones. Participates in the reduction of mitochondrial cytochrome P450 for steroidogenesis. Transfers electrons from adrenodoxin reductase to CYP11A1, a cytochrome P450 that catalyzes cholesterol side-chain cleavage. Does not form a ternary complex with adrenodoxin reductase and CYP11A1 but shuttles between the two enzymes to transfer electrons. The protein is Adrenodoxin, mitochondrial (Fdx1) of Rattus norvegicus (Rat).